The primary structure comprises 261 residues: Global transcriptional regulator CodY (261 aa).

The interval 1–159 is GAF domain; the sequence is MANLLSKTRR…SSTVVGIQLL (159 aa). The segment at residues 207 to 226 is a DNA-binding region (H-T-H motif); that stretch reads ASVIADRIGITRSVIVNALR.

The protein belongs to the CodY family.

The protein resides in the cytoplasm. Its function is as follows. DNA-binding global transcriptional regulator which is involved in the adaptive response to starvation and acts by directly or indirectly controlling the expression of numerous genes in response to nutrient availability. During rapid exponential growth, CodY is highly active and represses genes whose products allow adaptation to nutrient depletion. The protein is Global transcriptional regulator CodY of Streptococcus mutans serotype c (strain ATCC 700610 / UA159).